Consider the following 281-residue polypeptide: GDT1-like protein 4 (281 aa).

Residues 1-22 form the signal peptide; it reads MARRVSTTRLLLLLLLVAAAAA. A run of 6 helical transmembrane segments spans residues 66 to 86, 105 to 125, 137 to 157, 188 to 208, 226 to 246, and 258 to 278; these read AGLGLFDAFFASLSMILVSEI, TVLSGALSALVVMTILSTGLG, TNSAATVLYAFFGLRLLYIAW, IFSRFCTPIFLESFVLTFLAE, AVGVAVGATLGHTICTSFAVV, and GTVATIGGLLFLGFSLSSYFY.

Belongs to the GDT1 family.

Its subcellular location is the membrane. The chain is GDT1-like protein 4 from Oryza sativa subsp. indica (Rice).